Consider the following 189-residue polypeptide: GMP synthase [glutamine-hydrolyzing] subunit A (189 aa).

The region spanning 1–189 (MIVILNNGGQ…CKKCGFEFEE (189 aa)) is the Glutamine amidotransferase type-1 domain. Cysteine 76 (nucleophile) is an active-site residue. Residues histidine 163 and glutamate 165 contribute to the active site.

As to quaternary structure, heterodimer composed of a glutamine amidotransferase subunit (A) and a GMP-binding subunit (B).

The catalysed reaction is XMP + L-glutamine + ATP + H2O = GMP + L-glutamate + AMP + diphosphate + 2 H(+). It functions in the pathway purine metabolism; GMP biosynthesis; GMP from XMP (L-Gln route): step 1/1. Catalyzes the synthesis of GMP from XMP. The protein is GMP synthase [glutamine-hydrolyzing] subunit A of Methanococcus maripaludis (strain C6 / ATCC BAA-1332).